The following is a 502-amino-acid chain: Alpha-ketoglutarate-dependent dioxygenase FTO (502 aa).

Residues 32–324 (TPKDDEFYQQ…SSTHRVAECS (293 aa)) are fe2OG dioxygenase domain. Positions 96 and 108 each coordinate substrate. Asn202 lines the 2-oxoglutarate pocket. Positions 210–221 (PYLKEEPYFGMG) are loop L1; predicted to block binding of double-stranded DNA or RNA. Lys213 carries the post-translational modification N6-acetyllysine. Residues His228 and Asp230 each contribute to the Fe cation site. Position 228-231 (228-231 (HHDE)) interacts with substrate. Tyr292 is a binding site for 2-oxoglutarate. His304 provides a ligand contact to Fe cation. Residues 313–315 (RFS), Thr317, and Arg319 each bind 2-oxoglutarate.

Belongs to the fto family. Monomer. May also exist as homodimer. Requires Fe(2+) as cofactor. As to expression, ubiquitous. Highly expressed in teeth and weakly in bone.

Its subcellular location is the nucleus. It is found in the nucleus speckle. The protein localises to the cytoplasm. It carries out the reaction a 5'-end (N(7)-methyl 5'-triphosphoguanosine)-(N(6),2'-O-dimethyladenosine) in mRNA + 2-oxoglutarate + O2 = a 5'-end (N(7)-methyl 5'-triphosphoguanosine)-(2'-O-methyladenosine) in mRNA + formaldehyde + succinate + CO2. The catalysed reaction is an N(6)-methyladenosine in mRNA + 2-oxoglutarate + O2 = an adenosine in mRNA + formaldehyde + succinate + CO2. The enzyme catalyses N(6)-methyladenosine in U6 snRNA + 2-oxoglutarate + O2 = adenosine in U6 snRNA + formaldehyde + succinate + CO2. It catalyses the reaction a 5'-end (N(7)-methyl 5'-triphosphoguanosine)-(N(6),2'-O-dimethyladenosine) in U6 snRNA + 2-oxoglutarate + O2 = a 5'-end (N(7)-methyl 5'-triphosphoguanosine)-(2'-O-methyladenosine) in U6 snRNA + formaldehyde + succinate + CO2. It carries out the reaction an N(1)-methyladenosine in tRNA + 2-oxoglutarate + O2 = an adenosine in tRNA + formaldehyde + succinate + CO2. With respect to regulation, activated by ascorbate. Inhibited by N-oxalylglycine, fumarate and succinate. RNA demethylase that mediates oxidative demethylation of different RNA species, such as mRNAs, tRNAs and snRNAs, and acts as a regulator of fat mass, adipogenesis and energy homeostasis. Specifically demethylates N(6)-methyladenosine (m6A) RNA, the most prevalent internal modification of messenger RNA (mRNA) in higher eukaryotes. M6A demethylation by FTO affects mRNA expression and stability. Also able to demethylate m6A in U6 small nuclear RNA (snRNA). Mediates demethylation of N(6),2'-O-dimethyladenosine cap (m6A(m)), by demethylating the N(6)-methyladenosine at the second transcribed position of mRNAs and U6 snRNA. Demethylation of m6A(m) in the 5'-cap by FTO affects mRNA stability by promoting susceptibility to decapping. Also acts as a tRNA demethylase by removing N(1)-methyladenine from various tRNAs. Has no activity towards 1-methylguanine. Has no detectable activity towards double-stranded DNA. Also able to repair alkylated DNA and RNA by oxidative demethylation: demethylates single-stranded RNA containing 3-methyluracil, single-stranded DNA containing 3-methylthymine and has low demethylase activity towards single-stranded DNA containing 1-methyladenine or 3-methylcytosine. Ability to repair alkylated DNA and RNA is however unsure in vivo. Involved in the regulation of fat mass, adipogenesis and body weight, thereby contributing to the regulation of body size and body fat accumulation. Involved in the regulation of thermogenesis and the control of adipocyte differentiation into brown or white fat cells. Regulates activity of the dopaminergic midbrain circuitry via its ability to demethylate m6A in mRNAs. The protein is Alpha-ketoglutarate-dependent dioxygenase FTO of Rattus norvegicus (Rat).